The sequence spans 795 residues: MKFSELWLREWVNPAIDSDALANQITMAGLEVDGVEPVAGSFHGVVVGEVVECAQHPNADKLRVTKVNVGGDRLLDIVCGAPNCRQGLRVAVATIGAVLPGDFKIKAAKLRGEPSEGMLCSFSELGISDDHSGIIELPADAPIGTDIREYLKLDDNTIEISVTPNRADCLGIIGVARDVAVLNQLPLVEPEIVPVGATIDDTLPITVEAPEACPRYLGRVVKGINVKAPTPLWMKEKLRRCGIRSIDAVVDVTNYVLLELGQPMHAFDKDRIEGGIVVRMAKEGETLVLLDGTEAKLNADTLVIADHNKALAMGGIFGGEHSGVNDETQNVLLECAFFSPLSITGRARRHGLHTDASHRYERGVDPALQHKAMERATRLLIDICGGEAGPVIDITNEATLPKRATITLRRSKLDCLIGHHIADEQVTDILRRLGCEVTEGKDEWQAVAPSWRFDMEIEEDLVEEVARVYGYNNIPDEPVQASLIMGTHREADLSLKRVKTLLNDKGYQEVITYSFVDPKVQQMIHPGVEALLLPSPISVEMSAMRLSLWTGLLATVVYNQNRQQNRVRIFESGLRFVPDTQAPLGIRQDLMLAGVICGNRYEEHWNLAKETVDFYDLKGDLESVLDLTGKLNEVEFRAEANPALHPGQSAAIYLKGERIGFVGVVHPELERKLDLNGRTLVFELEWNKLADRVVPQAREISRFPANRRDIAVVVAENVPAADILSECKKVGVNQVVGVNLFDVYRGKGVAEGYKSLAISLILQDTSRTLEEEEIAATVAKCVEALKERFQASLRD.

In terms of domain architecture, tRNA-binding spans 39-148 (AGSFHGVVVG…ADAPIGTDIR (110 aa)). A B5 domain is found at 401–476 (PKRATITLRR…RVYGYNNIPD (76 aa)). Mg(2+)-binding residues include D454, D460, E463, and E464. The 94-residue stretch at 701–794 (SRFPANRRDI…LKERFQASLR (94 aa)) folds into the FDX-ACB domain.

Belongs to the phenylalanyl-tRNA synthetase beta subunit family. Type 1 subfamily. Tetramer of two alpha and two beta subunits. It depends on Mg(2+) as a cofactor.

It is found in the cytoplasm. It catalyses the reaction tRNA(Phe) + L-phenylalanine + ATP = L-phenylalanyl-tRNA(Phe) + AMP + diphosphate + H(+). In Shigella boydii serotype 4 (strain Sb227), this protein is Phenylalanine--tRNA ligase beta subunit.